Here is a 355-residue protein sequence, read N- to C-terminus: Peptide chain release factor 1 (355 aa).

Glutamine 233 carries the N5-methylglutamine modification. The segment covering 280–293 (ERRKKEQERADSRR) has biased composition (basic and acidic residues). Residues 280–306 (ERRKKEQERADSRRGQVGSGNRSERIR) are disordered.

It belongs to the prokaryotic/mitochondrial release factor family. In terms of processing, methylated by PrmC. Methylation increases the termination efficiency of RF1.

It localises to the cytoplasm. In terms of biological role, peptide chain release factor 1 directs the termination of translation in response to the peptide chain termination codons UAG and UAA. The sequence is that of Peptide chain release factor 1 from Rickettsia africae (strain ESF-5).